The chain runs to 362 residues: Mitochondrial glycine transporter (362 aa).

3 Solcar repeats span residues 22 to 108 (PDAT…MRTS), 132 to 236 (LTAM…FKND), and 269 to 354 (RSSI…LIKS). A run of 6 helical transmembrane segments spans residues 28–53 (LLAG…TRLQ), 83–109 (GTLP…RTSW), 138–163 (LTTG…TRFE), 211–234 (GSVA…EAFK), 273–299 (INST…KTRL), and 329–347 (GLSL…SWCI).

The protein belongs to the mitochondrial carrier (TC 2.A.29) family. SLC25A38 subfamily.

The protein resides in the mitochondrion inner membrane. The enzyme catalyses glycine(in) = glycine(out). In terms of biological role, mitochondrial glycine transporter that imports glycine into the mitochondrial matrix. Plays an important role in providing glycine for the first enzymatic step in heme biosynthesis, the condensation of glycine with succinyl-CoA to produce 5-aminolevulinate (ALA) in the mitochondrial matrix. The chain is Mitochondrial glycine transporter from Candida albicans (strain SC5314 / ATCC MYA-2876) (Yeast).